The chain runs to 185 residues: Elongation factor P (185 aa).

It belongs to the elongation factor P family.

It is found in the cytoplasm. It functions in the pathway protein biosynthesis; polypeptide chain elongation. In terms of biological role, involved in peptide bond synthesis. Stimulates efficient translation and peptide-bond synthesis on native or reconstituted 70S ribosomes in vitro. Probably functions indirectly by altering the affinity of the ribosome for aminoacyl-tRNA, thus increasing their reactivity as acceptors for peptidyl transferase. The chain is Elongation factor P from Metamycoplasma arthritidis (strain 158L3-1) (Mycoplasma arthritidis).